The primary structure comprises 215 residues: Phosphatidylserine decarboxylase proenzyme (215 aa).

The active-site Schiff-base intermediate with substrate; via pyruvic acid is Ser-184. Ser-184 carries the pyruvic acid (Ser); by autocatalysis modification.

This sequence belongs to the phosphatidylserine decarboxylase family. PSD-A subfamily. In terms of assembly, heterodimer of a large membrane-associated beta subunit and a small pyruvoyl-containing alpha subunit. Pyruvate is required as a cofactor. Is synthesized initially as an inactive proenzyme. Formation of the active enzyme involves a self-maturation process in which the active site pyruvoyl group is generated from an internal serine residue via an autocatalytic post-translational modification. Two non-identical subunits are generated from the proenzyme in this reaction, and the pyruvate is formed at the N-terminus of the alpha chain, which is derived from the carboxyl end of the proenzyme. The post-translation cleavage follows an unusual pathway, termed non-hydrolytic serinolysis, in which the side chain hydroxyl group of the serine supplies its oxygen atom to form the C-terminus of the beta chain, while the remainder of the serine residue undergoes an oxidative deamination to produce ammonia and the pyruvoyl prosthetic group on the alpha chain.

The protein localises to the cell membrane. The catalysed reaction is a 1,2-diacyl-sn-glycero-3-phospho-L-serine + H(+) = a 1,2-diacyl-sn-glycero-3-phosphoethanolamine + CO2. It participates in phospholipid metabolism; phosphatidylethanolamine biosynthesis; phosphatidylethanolamine from CDP-diacylglycerol: step 2/2. Functionally, catalyzes the formation of phosphatidylethanolamine (PtdEtn) from phosphatidylserine (PtdSer). This chain is Phosphatidylserine decarboxylase proenzyme, found in Aromatoleum aromaticum (strain DSM 19018 / LMG 30748 / EbN1) (Azoarcus sp. (strain EbN1)).